Here is a 2995-residue protein sequence, read N- to C-terminus: MRKVTEEKRHSSSMNSSTVETSFIAAPPVFLRKLKWAAVAAGCDVRLRVCVGGNPRPTLHWYHNDDPLVIDHEDYDGLWIRDCQQADGGLYTCVAVNHLGEARTSAVLAVLDLEEDSNSTEDESAEPHVSMEMKEQFMPPQGEAINSQPTGRGRAMLSHIPSDGLVVEREMRALGSRAPGLQEPLSPGRGQLDFKTSEATPFVQTQPPHKAQASITKSDVDATIDSTATKIKGTKTAMNGAEVSIKSSKITGSHQSGGLQDPSSIQTPKVSQASSKILDRVRAFEEQSHNSNMPKVSSRLSWGFNRTSSCNSEDETCKAGKFQANTKSDVALKRSFFKQKASSLEEQSTYVQKNFQSKLSEELHRIKKLVGKSNIKKAFSMEQLTQTDKQSSVSTESVPTQVIQKSEETGKHFTNLKAVPDAKERWTTLPKEQSSRLPKINLADKTKQPENETPPEMNENQENNSKPTQLLDGQVLNEKVSFIPGQCSPMLPRTNVSRKWPKSPAQPMVKDGLVQAPQKPPRLLESISTPPTPFKMTIPTIVVENKPVDEELDQKEGQIMRQNRDALDDFHTSVEKSIAEAPMSELPRKDALGTAGSELLQCIIKENTVARAPAESLLIITRPMQDVKVKAGETALLECFIAGSQAVDVDWLANGKLIQPALFDCKMQFDGHRCRLLFKSAHENDSGCYTCKLSTAKEELICTANLLVIPSKEPLFTRKLEVLEAIEGRSAQFDCKVSGCPPPEVTWTHCEKPLVESDNIHILNVNGHHSLLITHVNKESEGLYTAIAQNVHGKAASSAELYVQEPRPAISTHMSRLEKMPSIPEEPEVPEGEVERRTMPDFIKPLSDLEVIEGKEAVLKCRVTGLPYPKITWYHNGKKIESTNDRKMTQYRDVHSLVIQSVCHDHSGVYKCVISNKVGKAACYAHLYVAVSLPEPPDGPPVIESVTGRMILLSWKKPKNLDPSIDPASLMYVVQQQVLGSTQWTTIASSLTDTSYTVTSLSKGVCYSFRVLSTTGKTLSKPSQPTDLVQLVDRGEYFRKAPVIIDKPDIVYAVENQPVTITITINHVQATCTWKRRGVVLVNKLGALEMTTPDDDQHALHIAKVKSTDVGQLIFMANNQYGSDLGTLQLVIAVPPIFETIMEDLDVCVGETCHFAVVVDGKPDPDILWYKDGVLLAESSHLTFVYDDRECSLVVLNAQPEDVGVYTCTAKNLAGSVSCKAELTVHTAQNVEEEEEQMEDEATILRRMRMLTDYYDIHKEIGRGAFSYVKRVKHKNDQSFAAKFISVRAKKKTCALRELALLAELDHKSIVRFHDAFEKRRVVIILTELCHEELLERITKRTTILESEVQSIIRQLLEGIEYLHQNDIIHLDLKPENILMADQKTDQIRICDFGNALKVKPNEELYCKYGIPEFIAPEIVNQSPISKSTDIWPVGVITYLCLTGVSPFAGENDRDTLLNIRNYNVAFEESMFKDLCREAKGFIIKVLVSNKLRPDATECLLHPWFKSLTKGKSINTTLHKQVLARRKWQCSLIRYGSKMVMRSISELLDDSSSHVSLAVPRNLKDGSPPPSSSSDSDEDIDELPFIPMPHTMMFSGSRMSLTEIHEVDDKVIRGSNESYKKNLNQLDDIPESQIIAGQKNEDYLKNPKRTDNCLQRGSSVEVDQVASKTRRGLMRRGSSADSALLLQITPEDNEIKDTTEDSQKHMKKAVSMELPHRSSSPKTAKLSKEDYALKLDLMRQRLLKGGTVNKNMSGLRGPLLETLGVDDERRTSSLDRNFRNARLNASGDSGTFNNDSSEETYQKPAFRKRSSLRDENSESISLHRRSGAPLEIPSSSTGDHNVLKIKSTILDENKANLPPLFPRDISSKPPTPVLENKQVSKEEANSDVLIMNSSRSAFNLEDTEIKVEEMKEQDSVPENMNKSTEFPLDILPHDISSNYCSKLQANGKKASFLTPLPTPVLKISQPNIQPTAGRPGVFASAFSAHQPNLRSDIKNIDSEEIFEARFKKRESSLAHGLKRLTRTKSEESSPVPQRKSDEVVYRPGPVGSPLEFGSTGLKEKSKSVQDLREVDKEVGLGLIGRFSMRARKLQPIDKKEKKEISDSVTNKRQLTWATRRSKSLDKKENFETNKENLEKDTKKIAESPVLAVRRKFESNVSGIFDRVHSRSKDRKDKETKPHIDAEAPNVEKQDMKKINDSPVLALRKKFETKVSGISYRKQSQSEGEGTKFEGQKTPLFSRHHRSQSDGLIHKKMDIPENQLPLQTTTISSKETLNSSSSAHSIESSQTPETEIRSRWDRWGLSRGKRDRTPSNSRAPATPKEDFPPVFHIALKDHVLLEGNPVTLSCLPAGSPEPKILWLKDKKPLKLCDGMNLEACPDGRQLLMIMNISKKDAGIYECVATNNLASVTTSCILTLACIPNCPGTPEIRQIYNNTVLVQWKPSDTKVPCTYTIEKKFDGDDKWLTEATGVTDCFFNSSELPSGSTIRFRVACVNKAGQSPYSNESDGVSIDTKVTPQHQPAKMKTHSPASFPAMTAAVATSAFSLSLPSVFSQSISPTPAQSADVSNTFLEVQSSPKMSTPLDLPKPASSVNTMPPITQTQTVSPRSYTAPPSIGRSISPVPTYVPATCSLAPTPVSPSVIVVSSISPIGEGASSPTPETPTGQAVSSTKSETTLRQGVPQKPYSFLDEKARGRFGVIRDCRENATGKMFIAKIIPYDQQTKQTIIKEYEILKSLRCERIMALHEAYITPRYLVLITEYCSGKEILQNLIDRFCYSEDDVVGFIVQILQGLEYLHNCKILHLDIKPDNIMVTNLNVIKIIDFGSAQRFNPLSLQQCSRYLGTLEYMAPEMLKGDLVGPPADIWSLGVLSYIMLSGRHPFEDKDPQLTEAKIHEAKFDSTKLYPKVSQSASTFLKKILNSYPWCRPTIKDCLNHSWLHDSYLKKLRRQTLTFTTTRLKEFMGEHQRRCAESATKHKVILRVYQGGPSSPASPTKYTTQ.

An Ig-like 1 domain is found at 27-109; the sequence is PPVFLRKLKW…GEARTSAVLA (83 aa). A disulfide bridge links cysteine 50 with cysteine 93. Disordered stretches follow at residues 250-272 and 384-467; these read ITGS…KVSQ and LTQT…NSKP. Polar residues predominate over residues 384 to 404; sequence LTQTDKQSSVSTESVPTQVIQ. Low complexity predominate over residues 454–464; that stretch reads PPEMNENQENN. Ig-like domains lie at 613–701 and 714–802; these read PAES…EELI and PLFT…AELY. Cysteine 639 and cysteine 691 are disulfide-bonded. The tract at residues 815–834 is disordered; the sequence is SRLEKMPSIPEEPEVPEGEV. The 91-residue stretch at 840–930 folds into the Ig-like 4 domain; it reads PDFIKPLSDL…AACYAHLYVA (91 aa). Cysteine 861 and cysteine 912 are joined by a disulfide. One can recognise a Fibronectin type-III 1 domain in the interval 937 to 1035; it reads PDGPPVIESV…TDLVQLVDRG (99 aa). The region spanning 1135 to 1224 is the Ig-like 5 domain; it reads PPIFETIMED…GSVSCKAELT (90 aa). The 251-residue stretch at 1255–1505 folds into the Protein kinase 1 domain; sequence YDIHKEIGRG…ATECLLHPWF (251 aa). ATP is bound by residues 1261–1269 and lysine 1283; that span reads IGRGAFSYV. Aspartate 1372 serves as the catalytic Proton acceptor. 6 disordered regions span residues 1559–1582, 1776–1839, 2017–2058, 2163–2189, 2211–2254, and 2268–2322; these read VPRN…DIDE, RNFR…STGD, LKRL…TGLK, VHSR…VEKQ, SGIS…KMDI, and SKET…KEDF. Residues 1786–1795 show a composition bias toward polar residues; it reads SGDSGTFNND. A compositionally biased stretch (low complexity) spans 2274-2284; the sequence is SSSSAHSIESS. The span at 2289 to 2299 shows a compositional bias: basic and acidic residues; it reads TEIRSRWDRWG. The Ig-like 6 domain occupies 2323–2413; that stretch reads PPVFHIALKD…ASVTTSCILT (91 aa). Cysteine 2345 and cysteine 2397 are joined by a disulfide. A Fibronectin type-III 2 domain is found at 2420–2513; sequence CPGTPEIRQI…DGVSIDTKVT (94 aa). Disordered regions lie at residues 2574–2609 and 2648–2676; these read PKMS…YTAP and GEGA…LRQG. Polar residues-rich tracts occupy residues 2587–2605 and 2652–2674; these read SSVN…SPRS and SSPT…TTLR. The 253-residue stretch at 2682 to 2934 folds into the Protein kinase 2 domain; it reads YSFLDEKARG…IKDCLNHSWL (253 aa). ATP-binding positions include 2688–2696 and lysine 2711; that span reads KARGRFGVI. The active-site Proton acceptor is aspartate 2801.

The protein belongs to the protein kinase superfamily. CAMK Ser/Thr protein kinase family. In terms of processing, may be autophosphorylated. Preferentially expressed in striated muscle.

The protein localises to the nucleus. The catalysed reaction is L-seryl-[protein] + ATP = O-phospho-L-seryl-[protein] + ADP + H(+). The enzyme catalyses L-threonyl-[protein] + ATP = O-phospho-L-threonyl-[protein] + ADP + H(+). This Danio rerio (Zebrafish) protein is Striated muscle preferentially expressed protein kinase (speg).